The sequence spans 252 residues: 5'-nucleotidase SurE (252 aa).

Asp-8, Asp-9, Ser-39, and Asn-91 together coordinate a divalent metal cation.

It belongs to the SurE nucleotidase family. Requires a divalent metal cation as cofactor.

It localises to the cytoplasm. The enzyme catalyses a ribonucleoside 5'-phosphate + H2O = a ribonucleoside + phosphate. In terms of biological role, nucleotidase that shows phosphatase activity on nucleoside 5'-monophosphates. The chain is 5'-nucleotidase SurE from Bordetella petrii (strain ATCC BAA-461 / DSM 12804 / CCUG 43448).